The primary structure comprises 429 residues: Glutamate-1-semialdehyde 2,1-aminomutase 1 (429 aa).

At Lys-268 the chain carries N6-(pyridoxal phosphate)lysine.

This sequence belongs to the class-III pyridoxal-phosphate-dependent aminotransferase family. HemL subfamily. In terms of assembly, homodimer. It depends on pyridoxal 5'-phosphate as a cofactor.

It localises to the cytoplasm. The enzyme catalyses (S)-4-amino-5-oxopentanoate = 5-aminolevulinate. It functions in the pathway porphyrin-containing compound metabolism; protoporphyrin-IX biosynthesis; 5-aminolevulinate from L-glutamyl-tRNA(Glu): step 2/2. The sequence is that of Glutamate-1-semialdehyde 2,1-aminomutase 1 from Lysinibacillus sphaericus (strain C3-41).